Here is a 1818-residue protein sequence, read N- to C-terminus: Unconventional myosin-Vb (1818 aa).

Positions 8–60 (TRYTRVWIPDPDEVWRSAELTKDYKEGDKSLQLRLEDDTILEYPVDVQNNQVP) constitute a Myosin N-terminal SH3-like domain. The segment at 21–40 (VWRSAELTKDYKEGDKSLQL) is requires for interaction with LIMA1. The region spanning 69-762 (VGENDLTALS…QVAYLEKLRA (694 aa)) is the Myosin motor domain. 163–170 (GESGAGKT) is a binding site for ATP. Residues 641–663 (LNLLMETLNATTPHYVRCIKPND) are actin-binding. IQ domains lie at 765–794 (FREA…ATLS), 788–817 (LRAA…TRAA), 813–842 (RTRA…ATVI), 836–865 (VCRA…EHKA), 861–890 (MEHK…AAIV), and 884–913 (ERDA…EARS). Disordered regions lie at residues 1086 to 1120 (LRDE…EIGD) and 1161 to 1188 (QAQL…VDQD). Residues 1098-1118 (PSNQSSLESDSNYPSISTSEI) are compositionally biased toward polar residues. 2 coiled-coil regions span residues 1140-1261 (MTVF…LILR) and 1313-1415 (LEAQ…ALAQ). A Phosphoserine modification is found at Ser-1416. A Dilute domain is found at 1496–1773 (SSTINGIKKV…IRTIQAQLQE (278 aa)).

This sequence belongs to the TRAFAC class myosin-kinesin ATPase superfamily. Myosin family. In terms of assembly, component of the CART complex, at least composed of ACTN4, HGS/HRS, MYO5B and TRIM3. Interacts with RAB11FIP2. Interacts with RAB11A and RAB8A. Found in a complex with CFTR and RAB11A. Interacts with NPC1L1. Interacts with LIMA1.

It is found in the cytoplasm. In terms of biological role, may be involved in vesicular trafficking via its association with the CART complex. The CART complex is necessary for efficient transferrin receptor recycling but not for EGFR degradation. Required in a complex with RAB11A and RAB11FIP2 for the transport of NPC1L1 to the plasma membrane. Together with RAB11A participates in CFTR trafficking to the plasma membrane and TF (transferrin) recycling in nonpolarized cells. Together with RAB11A and RAB8A participates in epithelial cell polarization. Together with RAB25 regulates transcytosis. Required for proper localization of bile salt export pump ABCB11 at the apical/canalicular plasma membrane of hepatocytes. This chain is Unconventional myosin-Vb (Myo5b), found in Mus musculus (Mouse).